The chain runs to 237 residues: Proteasome subunit alpha (237 aa).

This sequence belongs to the peptidase T1A family. In terms of assembly, the 20S proteasome core is composed of 14 alpha and 14 beta subunits that assemble into four stacked heptameric rings, resulting in a barrel-shaped structure. The two inner rings, each composed of seven catalytic beta subunits, are sandwiched by two outer rings, each composed of seven alpha subunits. The catalytic chamber with the active sites is on the inside of the barrel. Has a gated structure, the ends of the cylinder being occluded by the N-termini of the alpha-subunits. Is capped by the proteasome-associated ATPase, ARC.

The protein localises to the cytoplasm. It functions in the pathway protein degradation; proteasomal Pup-dependent pathway. With respect to regulation, the formation of the proteasomal ATPase ARC-20S proteasome complex, likely via the docking of the C-termini of ARC into the intersubunit pockets in the alpha-rings, may trigger opening of the gate for substrate entry. Interconversion between the open-gate and close-gate conformations leads to a dynamic regulation of the 20S proteasome proteolysis activity. In terms of biological role, component of the proteasome core, a large protease complex with broad specificity involved in protein degradation. The polypeptide is Proteasome subunit alpha (Kineococcus radiotolerans (strain ATCC BAA-149 / DSM 14245 / SRS30216)).